Reading from the N-terminus, the 343-residue chain is L-threonine 3-dehydrogenase (343 aa).

Cysteine 40 contributes to the Zn(2+) binding site. Residues threonine 42 and histidine 45 each act as charge relay system in the active site. 6 residues coordinate Zn(2+): histidine 65, glutamate 66, cysteine 95, cysteine 98, cysteine 101, and cysteine 109. Residues isoleucine 177, aspartate 197, arginine 202, 264 to 266, and 288 to 289 contribute to the NAD(+) site; these read LGI and IY.

It belongs to the zinc-containing alcohol dehydrogenase family. As to quaternary structure, homotetramer. Zn(2+) is required as a cofactor.

It is found in the cytoplasm. It carries out the reaction L-threonine + NAD(+) = (2S)-2-amino-3-oxobutanoate + NADH + H(+). It functions in the pathway amino-acid degradation; L-threonine degradation via oxydo-reductase pathway; glycine from L-threonine: step 1/2. Catalyzes the NAD(+)-dependent oxidation of L-threonine to 2-amino-3-ketobutyrate. This Vibrio vulnificus (strain CMCP6) protein is L-threonine 3-dehydrogenase.